Consider the following 409-residue polypeptide: Wadjet protein JetD (409 aa).

Component of antiplasmid transformation system Wadjet type I, composed of JetA, JetB, JetC and JetD. Expression of Wadjet type I in B.subtilis (strain BEST7003) reduces the transformation efficiency of plasmid pHCMC05. The polypeptide is Wadjet protein JetD (Bacillus cereus (strain Q1)).